The sequence spans 299 residues: Endonuclease 4 (299 aa).

The N-terminal stretch at 1–24 (MSSSLRQWFARVLVLTQLINGALC) is a signal peptide. A divalent metal cation is bound by residues W25 and H30. Position 25-30 (25-30 (WGKEGH)) interacts with substrate. C34 and C65 are oxidised to a cystine. The a divalent metal cation site is built by D69 and H84. Residues 69–75 (DEIKHHW), 84–87 (HYVD), and 94–99 (NYEYCR) each bind substrate. 3 disulfide bridges follow: C93–C246, C101–C111, and C226–C233. Residues N118 and Y136 each coordinate substrate. An N-linked (GlcNAc...) asparagine glycan is attached at N118. A glycan (N-linked (GlcNAc...) asparagine) is linked at N137. Positions 147, 151, 157, 181, and 185 each coordinate a divalent metal cation. A substrate binding region spans residues 147-196 (HFIGDIHQPLHVGFLGDEGGNTITVRWYRRKTNLHHVWDNMIIESALKTY). 3 N-linked (GlcNAc...) asparagine glycosylation sites follow: N198, N211, and N229. A propeptide spans 284–299 (ATLNRIFSSKPKHAGS) (removed in mature form).

The protein belongs to the nuclease type I family. Monomer. The cofactor is Mn(2+). Ca(2+) serves as cofactor.

It carries out the reaction Endonucleolytic cleavage to 5'-phosphomononucleotide and 5'-phosphooligonucleotide end-products.. Functionally, endonuclease that can use single-stranded RNA and DNA as substrates. In contradiction with PubMed:23620482, cannot hydrolyze single-stranded DNA and does not cleave mismatches. The sequence is that of Endonuclease 4 from Arabidopsis thaliana (Mouse-ear cress).